Consider the following 160-residue polypeptide: Ribosomal RNA large subunit methyltransferase H (160 aa).

Residues leucine 76, glycine 108, and 127–132 each bind S-adenosyl-L-methionine; that span reads LGKMTW.

This sequence belongs to the RNA methyltransferase RlmH family. As to quaternary structure, homodimer.

It localises to the cytoplasm. The catalysed reaction is pseudouridine(1915) in 23S rRNA + S-adenosyl-L-methionine = N(3)-methylpseudouridine(1915) in 23S rRNA + S-adenosyl-L-homocysteine + H(+). Specifically methylates the pseudouridine at position 1915 (m3Psi1915) in 23S rRNA. In Sinorhizobium medicae (strain WSM419) (Ensifer medicae), this protein is Ribosomal RNA large subunit methyltransferase H.